The following is a 273-amino-acid chain: Undecaprenyl-diphosphatase (273 aa).

Helical transmembrane passes span 6–26, 45–65, 90–110, 116–136, 190–210, 222–242, and 252–272; these read SLLI…LPVS, AKTF…VMFW, LTLI…LVFH, LFNP…LIAA, YAAS…ATVL, ADIP…LIAI, and ISFI…YVVF.

The protein belongs to the UppP family.

The protein resides in the cell inner membrane. It catalyses the reaction di-trans,octa-cis-undecaprenyl diphosphate + H2O = di-trans,octa-cis-undecaprenyl phosphate + phosphate + H(+). In terms of biological role, catalyzes the dephosphorylation of undecaprenyl diphosphate (UPP). Confers resistance to bacitracin. The polypeptide is Undecaprenyl-diphosphatase (Salmonella heidelberg (strain SL476)).